A 31-amino-acid polypeptide reads, in one-letter code: Cyclotide mech-5 (31 aa).

A cross-link (cyclopeptide (Gly-Asp)) is located at residues 1–31 (GVIPCGESCVFIPCISSVVGCTCKNKVCYRD). Intrachain disulfides connect Cys5–Cys21, Cys9–Cys23, and Cys14–Cys28.

In terms of processing, this is a cyclic peptide. Post-translationally, contains 3 disulfide bonds.

Functionally, probably participates in a plant defense mechanism (Potential). Binds to and induces leakage in phospholipd membranes, particularly ones containing 1-palmitoyl-2-oleophosphatidylethanolamine (POPE). The polypeptide is Cyclotide mech-5 (Melicytus chathamicus (Chatham Island mahoe)).